Reading from the N-terminus, the 249-residue chain is Basigin (249 aa).

Residues 1–82 form the Ig-like C2-type domain; it reads AAGTIQTSVN…VGRSNIVVEG (82 aa). Residues 1-187 are Extracellular-facing; the sequence is AAGTIQTSVN…MTLRVRSRLA (187 aa). Disulfide bonds link cysteine 20–cysteine 66 and cysteine 105–cysteine 165. N-linked (GlcNAc...) asparagine glycans are attached at residues asparagine 23, asparagine 132, and asparagine 166. The Ig-like V-type domain maps to 84–179; that stretch reads PRIKVGKKSE…TQGSVQEIMT (96 aa). A helical membrane pass occupies residues 188–208; sequence ALWPFLGIVAEVLVLVTIIFI. The Cytoplasmic portion of the chain corresponds to 209 to 249; it reads YEKRRKPDQTLDEDDPGAAPLKGSGHHMNDKDKNVRQRNAT. The tract at residues 216–249 is disordered; it reads DQTLDEDDPGAAPLKGSGHHMNDKDKNVRQRNAT. Residue threonine 218 is modified to Phosphothreonine. At serine 232 the chain carries Phosphoserine.

Homooligomer. Interacts with VEGFA, KDR/VEGFR2, PPIA/CYPA, SLC16A12, SLC16A11, ATP1B2, MAG, L1CAM and AJAP1. Interacts with SLC16A3; interaction mediates SLC16A3 targeting to the plasma membrane. Interacts with SLC16A1; interaction mediates SLC16A1 targeting to the plasma membrane. Interacts with PPIL2; regulates BSG transport to the cell membrane. Interacts with XKR8; promoting its localization at the cell membrane. Interacts with SLC16A6; this interaction mediates targeting to the plasma membrane.

The protein localises to the cell membrane. It is found in the endoplasmic reticulum membrane. It localises to the basolateral cell membrane. Functionally, signaling receptor for cyclophilins, essential for PPIA/CYPA and PPIB/CYPB-dependent signaling related to chemotaxis and adhesion of immune cells. Plays an important role in targeting the monocarboxylate transporters SLC16A1/GLUT1, SLC16A3, SLC16A8, SLC16A11 and SLC16A12 to the plasma membrane. Acts as a coreceptor for vascular endothelial growth factor receptor 2 (KDR/VEGFR2) in endothelial cells enhancing its VEGFA-mediated activation and downstream signaling. Promotes angiogenesis through EPAS1/HIF2A-mediated up-regulation of VEGFA and KDR/VEGFR2 in endothelial cells. In Cricetulus griseus (Chinese hamster), this protein is Basigin (BSG).